Consider the following 218-residue polypeptide: Regulator of G-protein signaling 20 (218 aa).

A compositionally biased stretch (basic and acidic residues) spans 1 to 10 (MGSERTEMRK). The tract at residues 1-26 (MGSERTEMRKRQMAATQETPGTAQAQ) is disordered. Residues 14-26 (AATQETPGTAQAQ) show a composition bias toward polar residues. Residues 92 to 208 (SFDKLMLTPA…MNSAIYKDLL (117 aa)) enclose the RGS domain.

Forms a complex with G(alpha)z/i2 subunits and mu-opioid receptors; the formation of this complex results in mu-opioid receptor desensitization. Interacts with OPRM1. Post-translationally, fatty acylated. Heavily palmitoylated in the cysteine string motif. In terms of processing, N- and O-glycosylated in synapsomal membranes. Sumoylated by SUMO1 and SUM02 in synaptosomes. The sumoylated forms act as a scaffold for sequestering mu-opioid receptor-activated G(alpha) subunits.

The protein localises to the membrane. The protein resides in the nucleus. It is found in the cytoplasm. Inhibits signal transduction by increasing the GTPase activity of G protein alpha subunits thereby driving them into their inactive GDP-bound form. Binds selectively to G(z)-alpha and G(alpha)-i2 subunits, accelerates their GTPase activity and regulates their signaling activities. The G(z)-alpha activity is inhibited by the phosphorylation and palmitoylation of the G-protein. Negatively regulates mu-opioid receptor-mediated activation of the G-proteins. This Gallus gallus (Chicken) protein is Regulator of G-protein signaling 20 (RGS20).